The primary structure comprises 417 residues: Serine hydroxymethyltransferase 1 (417 aa).

(6S)-5,6,7,8-tetrahydrofolate contacts are provided by residues L121 and 125 to 127 (GHL). K230 carries the N6-(pyridoxal phosphate)lysine modification. 355–357 (SPF) lines the (6S)-5,6,7,8-tetrahydrofolate pocket.

It belongs to the SHMT family. Homodimer. Pyridoxal 5'-phosphate serves as cofactor.

The protein resides in the cytoplasm. The catalysed reaction is (6R)-5,10-methylene-5,6,7,8-tetrahydrofolate + glycine + H2O = (6S)-5,6,7,8-tetrahydrofolate + L-serine. It participates in one-carbon metabolism; tetrahydrofolate interconversion. The protein operates within amino-acid biosynthesis; glycine biosynthesis; glycine from L-serine: step 1/1. Its function is as follows. Catalyzes the reversible interconversion of serine and glycine with tetrahydrofolate (THF) serving as the one-carbon carrier. This reaction serves as the major source of one-carbon groups required for the biosynthesis of purines, thymidylate, methionine, and other important biomolecules. Also exhibits THF-independent aldolase activity toward beta-hydroxyamino acids, producing glycine and aldehydes, via a retro-aldol mechanism. This Pseudomonas aeruginosa (strain ATCC 15692 / DSM 22644 / CIP 104116 / JCM 14847 / LMG 12228 / 1C / PRS 101 / PAO1) protein is Serine hydroxymethyltransferase 1.